A 388-amino-acid chain; its full sequence is Coproporphyrin III ferrochelatase (388 aa).

Fe-coproporphyrin III-binding residues include S59 and Y124. Residues H186 and E276 each coordinate Fe(2+). Positions 349–369 (QSPQHASRAVTDAAATGRRGD) are disordered.

Belongs to the ferrochelatase family.

Its subcellular location is the cytoplasm. The catalysed reaction is Fe-coproporphyrin III + 2 H(+) = coproporphyrin III + Fe(2+). The protein operates within porphyrin-containing compound metabolism; protoheme biosynthesis. Involved in coproporphyrin-dependent heme b biosynthesis. Catalyzes the insertion of ferrous iron into coproporphyrin III to form Fe-coproporphyrin III. This Frankia alni (strain DSM 45986 / CECT 9034 / ACN14a) protein is Coproporphyrin III ferrochelatase.